Here is a 433-residue protein sequence, read N- to C-terminus: Serine hydroxymethyltransferase (433 aa).

Residues L132 and 136-138 (GHL) contribute to the (6S)-5,6,7,8-tetrahydrofolate site. K241 is subject to N6-(pyridoxal phosphate)lysine.

It belongs to the SHMT family. Homodimer. It depends on pyridoxal 5'-phosphate as a cofactor.

The protein resides in the cytoplasm. The enzyme catalyses (6R)-5,10-methylene-5,6,7,8-tetrahydrofolate + glycine + H2O = (6S)-5,6,7,8-tetrahydrofolate + L-serine. It functions in the pathway one-carbon metabolism; tetrahydrofolate interconversion. The protein operates within amino-acid biosynthesis; glycine biosynthesis; glycine from L-serine: step 1/1. In terms of biological role, catalyzes the reversible interconversion of serine and glycine with tetrahydrofolate (THF) serving as the one-carbon carrier. This reaction serves as the major source of one-carbon groups required for the biosynthesis of purines, thymidylate, methionine, and other important biomolecules. Also exhibits THF-independent aldolase activity toward beta-hydroxyamino acids, producing glycine and aldehydes, via a retro-aldol mechanism. This chain is Serine hydroxymethyltransferase, found in Rhodopseudomonas palustris (strain BisA53).